A 237-amino-acid chain; its full sequence is GATA zinc finger domain-containing protein 18 (237 aa).

Composition is skewed to low complexity over residues 1–28 (MAHN…KNNN) and 87–118 (NTST…PNSN). Disordered stretches follow at residues 1 to 31 (MAHN…NSEY), 78 to 119 (PTNT…NSNL), and 140 to 186 (FEEG…GGCS). Positions 140 to 151 (FEEGDDEEETSS) are enriched in acidic residues. A compositionally biased stretch (low complexity) spans 152-167 (DSDSSSSSSTSSSSSE). The GATA-type zinc finger occupies 185-212 (CSICKTQETPYWRKGKDGDKTVYLCNAC).

In Dictyostelium discoideum (Social amoeba), this protein is GATA zinc finger domain-containing protein 18 (gtaR).